A 261-amino-acid chain; its full sequence is Ethanolamine ammonia-lyase small subunit (261 aa).

Adenosylcob(III)alamin-binding residues include Val157, Glu178, and Cys207.

It belongs to the EutC family. The basic unit is a heterodimer which dimerizes to form tetramers. The heterotetramers trimerize; 6 large subunits form a core ring with 6 small subunits projecting outwards. Adenosylcob(III)alamin serves as cofactor.

It is found in the bacterial microcompartment. The enzyme catalyses ethanolamine = acetaldehyde + NH4(+). It functions in the pathway amine and polyamine degradation; ethanolamine degradation. Its function is as follows. Catalyzes the deamination of various vicinal amino-alcohols to oxo compounds. Allows this organism to utilize ethanolamine as the sole source of nitrogen and carbon in the presence of external vitamin B12. The protein is Ethanolamine ammonia-lyase small subunit of Rhodopseudomonas palustris (strain BisA53).